Here is a 345-residue protein sequence, read N- to C-terminus: Neuropeptide receptor 15 (345 aa).

Residues 1–11 (MSVAVGIPYVC) lie on the Extracellular side of the membrane. The chain crosses the membrane as a helical span at residues 12-32 (FFIILSVVGIIGNVIVIYAIA). Over 33 to 40 (GDRNMRKS) the chain is Cytoplasmic. A helical membrane pass occupies residues 41–61 (VMNILLLNLAVADLANLIFTI). The Extracellular portion of the chain corresponds to 62–90 (PEWIPPVFFGSTDWLFPSFLCPVCRYLEC). Cysteines 82 and 171 form a disulfide. Residues 91-111 (VFLFASISTQMIVCIERYIAI) form a helical membrane-spanning segment. Topologically, residues 112–125 (VLPMQARQLCSRRN) are cytoplasmic. The helical transmembrane segment at 126 to 146 (VLITVLVDWIFVACFASPYAV) threads the bilayer. The Extracellular segment spans residues 147–187 (WHSVKTKDRNTNSLRFKLFQLSATCSNTVGKSTWWQGYKLT). Residues 188 to 208 (EFLAFYFVPCFIITVVYTKVA) form a helical membrane-spanning segment. The Cytoplasmic portion of the chain corresponds to 209–246 (KCLWCKDPTLQCETRSCLDNKSSSRSSDALRTRRNVVK). Residues 247–267 (MLIACVAVYFVCYSPIQVIFL) traverse the membrane as a helical segment. The Extracellular segment spans residues 268–281 (SKAVLNVTIHPPYD). The chain crosses the membrane as a helical span at residues 282-304 (FILLMNALAMTCSASNPLLYTLF). Over 305-345 (SQKFRRRLRDVLYCPSDVENETKTYYSINNTSIVGPRASFN) the chain is Cytoplasmic.

Belongs to the G-protein coupled receptor 1 family. In terms of tissue distribution, expressed in pharyngeal muscle and AWC, ASG, ASE, ASI, and ASJ sensory neurons. Expressed in ASI neuron. Expressed in AFD neurons and in AVK interneuron.

Its subcellular location is the cell membrane. Functionally, probable receptor for neuropeptide ligand nlp-8 that plays a role in octopamine signaling and specifically, the octopamine inhibition of aversion responses in olfactory sensory neurons. Plays a crucial role in daf-7 expression. Acts in concert with gpa-4 to activate TGF-beta-like daf-7 secretion in the ASI neuron, thereby promoting larval development and inhibition of dauer diapause. Suppresses immune response against pathogenic infection by inhibiting transcription regulators elt-2 and hlh-30 in ASJ neuron. Promotes pathogen avoidance behavior via intestinal gon-2, independent of aerotaxis. This chain is Neuropeptide receptor 15 (npr-15), found in Caenorhabditis elegans.